The primary structure comprises 417 residues: Histidinol-phosphate aminotransferase 1, chloroplastic (417 aa).

Residues 1 to 40 (MGVINVQGSPSFSIHSSESNLRKSRALKKPFCSIRNRVYC) constitute a chloroplast transit peptide. Ala41 is subject to N-acetylalanine. Lys277 is modified (N6-(pyridoxal phosphate)lysine).

The protein belongs to the class-II pyridoxal-phosphate-dependent aminotransferase family. Histidinol-phosphate aminotransferase subfamily. As to quaternary structure, homodimer. The cofactor is pyridoxal 5'-phosphate. In terms of tissue distribution, expressed in both vegetative and reproductive tissues.

It is found in the plastid. It localises to the chloroplast. It catalyses the reaction L-histidinol phosphate + 2-oxoglutarate = 3-(imidazol-4-yl)-2-oxopropyl phosphate + L-glutamate. It participates in amino-acid biosynthesis; L-histidine biosynthesis; L-histidine from 5-phospho-alpha-D-ribose 1-diphosphate: step 7/9. This is Histidinol-phosphate aminotransferase 1, chloroplastic (HISN6A) from Arabidopsis thaliana (Mouse-ear cress).